Consider the following 224-residue polypeptide: MERRICIAIDGPAAAGKSTVAKLIANRLSYVYIDTGAMYRALTYRALQCGVDIHDEQALLSLLGDTSIELKPSPQGQLVFVNGEDVTDIIRGEAVTNAVSFVAKHPLVREEMVARQRALAEGGGVVMDGRDIGTNVLPNAEVKIFLKASVEERARRRHEENIARGFPSDLEKLKEEIAHRDRIDSERETAPLRKAPDAVEIDTTSLTVEEVAARIMEIVNERIG.

An ATP-binding site is contributed by 11 to 19; the sequence is GPAAAGKST.

This sequence belongs to the cytidylate kinase family. Type 1 subfamily.

The protein localises to the cytoplasm. It catalyses the reaction CMP + ATP = CDP + ADP. The enzyme catalyses dCMP + ATP = dCDP + ADP. The protein is Cytidylate kinase of Geobacillus thermodenitrificans (strain NG80-2).